The sequence spans 163 residues: Nucleotide-binding protein Cj0374 (163 aa).

This sequence belongs to the YajQ family.

Nucleotide-binding protein. The polypeptide is Nucleotide-binding protein Cj0374 (Campylobacter jejuni subsp. jejuni serotype O:2 (strain ATCC 700819 / NCTC 11168)).